We begin with the raw amino-acid sequence, 633 residues long: ATP-dependent RNA helicase mrh4, mitochondrial (633 aa).

A mitochondrion-targeting transit peptide spans Met1–Met38. The tract at residues Met50–Lys115 is disordered. Polar residues predominate over residues Leu52 to Gln63. Basic and acidic residues predominate over residues Arg98–Pro109. The Q motif motif lies at Ser142 to Arg175. A Helicase ATP-binding domain is found at Ser195–Leu407. Ala208–Thr215 is a binding site for ATP. A DEAD box motif is present at residues Asp354–Asp357. In terms of domain architecture, Helicase C-terminal spans Phe458 to Ile633.

It belongs to the DEAD box helicase family. MRH4 subfamily.

It is found in the mitochondrion. It catalyses the reaction ATP + H2O = ADP + phosphate + H(+). ATP-binding RNA helicase involved in mitochondrial RNA metabolism. Required for maintenance of mitochondrial DNA. This chain is ATP-dependent RNA helicase mrh4, mitochondrial (mrh4), found in Aspergillus niger (strain ATCC MYA-4892 / CBS 513.88 / FGSC A1513).